Reading from the N-terminus, the 368-residue chain is Flagellar P-ring protein 1 (368 aa).

The first 24 residues, 1-24 (MIFKQIRRLIAAALLAALSLPAAA), serve as a signal peptide directing secretion.

This sequence belongs to the FlgI family. The basal body constitutes a major portion of the flagellar organelle and consists of four rings (L,P,S, and M) mounted on a central rod.

The protein localises to the periplasm. The protein resides in the bacterial flagellum basal body. Assembles around the rod to form the L-ring and probably protects the motor/basal body from shearing forces during rotation. The sequence is that of Flagellar P-ring protein 1 from Chromobacterium violaceum (strain ATCC 12472 / DSM 30191 / JCM 1249 / CCUG 213 / NBRC 12614 / NCIMB 9131 / NCTC 9757 / MK).